The sequence spans 638 residues: Threonine--tRNA ligase (638 aa).

The 61-residue stretch at 1-61 folds into the TGS domain; sequence MPVITLPDGS…EHDARIEIVT (61 aa). A catalytic region spans residues 243-534; that stretch reads DHRKIAKAQD…LIEEYAGHFP (292 aa). 3 residues coordinate Zn(2+): cysteine 334, histidine 385, and histidine 511.

It belongs to the class-II aminoacyl-tRNA synthetase family. In terms of assembly, homodimer. Zn(2+) is required as a cofactor.

It is found in the cytoplasm. The catalysed reaction is tRNA(Thr) + L-threonine + ATP = L-threonyl-tRNA(Thr) + AMP + diphosphate + H(+). In terms of biological role, catalyzes the attachment of threonine to tRNA(Thr) in a two-step reaction: L-threonine is first activated by ATP to form Thr-AMP and then transferred to the acceptor end of tRNA(Thr). Also edits incorrectly charged L-seryl-tRNA(Thr). This is Threonine--tRNA ligase from Idiomarina loihiensis (strain ATCC BAA-735 / DSM 15497 / L2-TR).